The sequence spans 367 residues: Zinc finger CCCH domain-containing protein 56 (367 aa).

A disordered region spans residues 38-80; it reads YNSQWNADGGGGGSSRAGSEQPPPGKKSRGGGGGEGGGNTSKS. Residues 67–76 show a composition bias toward gly residues; sequence GGGGGEGGGN. 3 consecutive C3H1-type zinc fingers follow at residues 87 to 114, 169 to 197, and 245 to 273; these read FFKT…HGME, AYKG…HDEQ, and NWKT…HGAA.

This Oryza sativa subsp. japonica (Rice) protein is Zinc finger CCCH domain-containing protein 56.